The chain runs to 252 residues: Type III pantothenate kinase (252 aa).

Residue 6–13 coordinates ATP; that stretch reads DIGNTNTV. 105–108 lines the substrate pocket; the sequence is GADR. The Proton acceptor role is filled by Asp107. A K(+)-binding site is contributed by Asp127. Residue Thr130 coordinates ATP. Thr182 provides a ligand contact to substrate.

Belongs to the type III pantothenate kinase family. Homodimer. Requires NH4(+) as cofactor. It depends on K(+) as a cofactor.

Its subcellular location is the cytoplasm. It catalyses the reaction (R)-pantothenate + ATP = (R)-4'-phosphopantothenate + ADP + H(+). The protein operates within cofactor biosynthesis; coenzyme A biosynthesis; CoA from (R)-pantothenate: step 1/5. Functionally, catalyzes the phosphorylation of pantothenate (Pan), the first step in CoA biosynthesis. The protein is Type III pantothenate kinase of Salinispora arenicola (strain CNS-205).